The sequence spans 446 residues: Enolase 1 (446 aa).

Residues H164 and E173 each coordinate substrate. E216 (proton donor) is an active-site residue. Mg(2+) is bound by residues D251, E302, and D329. Substrate is bound by residues E302 and D329. The Proton acceptor role is filled by K354. Residues 381–384 (SHRS) and K405 each bind substrate.

Belongs to the enolase family. Homodimer. Requires Mg(2+) as cofactor.

It is found in the cytoplasm. The catalysed reaction is (2R)-2-phosphoglycerate = phosphoenolpyruvate + H2O. Its pathway is carbohydrate degradation; glycolysis; pyruvate from D-glyceraldehyde 3-phosphate: step 4/5. The protein is Enolase 1 (ENO1) of Zea mays (Maize).